An 87-amino-acid polypeptide reads, in one-letter code: Small ribosomal subunit protein uS19 (87 aa).

The disordered stretch occupies residues 1–29 (MARSLKKGPFVDHHLQKKVDVQNKEGTKK). Over residues 9–28 (PFVDHHLQKKVDVQNKEGTK) the composition is skewed to basic and acidic residues.

Belongs to the universal ribosomal protein uS19 family.

Functionally, protein S19 forms a complex with S13 that binds strongly to the 16S ribosomal RNA. This Protochlamydia amoebophila (strain UWE25) protein is Small ribosomal subunit protein uS19.